Here is an 88-residue protein sequence, read N- to C-terminus: Putative membrane protein insertion efficiency factor (88 aa).

The segment at 64-88 (GVDPVPKKSSSKKTSSTTACGCGHS) is disordered.

This sequence belongs to the UPF0161 family.

It is found in the cell inner membrane. In terms of biological role, could be involved in insertion of integral membrane proteins into the membrane. The chain is Putative membrane protein insertion efficiency factor from Herminiimonas arsenicoxydans.